A 405-amino-acid chain; its full sequence is Riboflavin biosynthesis protein RibBA (405 aa).

The tract at residues 1–205 is DHBP synthase; that stretch reads MEQIKLDSIA…IKDLIEYRLT (205 aa). D-ribulose 5-phosphate is bound by residues 30–31, aspartate 35, 144–148, and glutamate 168; these read RE and RVGHT. A Mg(2+)-binding site is contributed by glutamate 31. Position 147 (histidine 147) interacts with Mg(2+). The interval 206–405 is GTP cyclohydrolase II; the sequence is HESLVKREIG…KMGHTILKKD (200 aa). 256–260 contributes to the GTP binding site; the sequence is RVHSS. Residues cysteine 261, cysteine 272, and cysteine 274 each contribute to the Zn(2+) site. GTP-binding positions include glutamine 277, 299–301, and threonine 321; that span reads EGR. Aspartate 333 functions as the Proton acceptor; for GTP cyclohydrolase activity in the catalytic mechanism. Residue arginine 335 is the Nucleophile; for GTP cyclohydrolase activity of the active site. GTP-binding residues include threonine 356 and lysine 361.

It in the N-terminal section; belongs to the DHBP synthase family. In the C-terminal section; belongs to the GTP cyclohydrolase II family. Requires Mg(2+) as cofactor. Mn(2+) serves as cofactor. Zn(2+) is required as a cofactor.

The enzyme catalyses D-ribulose 5-phosphate = (2S)-2-hydroxy-3-oxobutyl phosphate + formate + H(+). It catalyses the reaction GTP + 4 H2O = 2,5-diamino-6-hydroxy-4-(5-phosphoribosylamino)-pyrimidine + formate + 2 phosphate + 3 H(+). Its pathway is cofactor biosynthesis; riboflavin biosynthesis; 2-hydroxy-3-oxobutyl phosphate from D-ribulose 5-phosphate: step 1/1. It participates in cofactor biosynthesis; riboflavin biosynthesis; 5-amino-6-(D-ribitylamino)uracil from GTP: step 1/4. Catalyzes the conversion of D-ribulose 5-phosphate to formate and 3,4-dihydroxy-2-butanone 4-phosphate. In terms of biological role, catalyzes the conversion of GTP to 2,5-diamino-6-ribosylamino-4(3H)-pyrimidinone 5'-phosphate (DARP), formate and pyrophosphate. In Cytophaga hutchinsonii (strain ATCC 33406 / DSM 1761 / CIP 103989 / NBRC 15051 / NCIMB 9469 / D465), this protein is Riboflavin biosynthesis protein RibBA.